A 203-amino-acid chain; its full sequence is GTP-binding protein yptV1 (203 aa).

GTP is bound by residues 15 to 23 (GDSGVGKSC), 33 to 40 (YTESYIST), 63 to 67 (DTAGQ), 121 to 124 (NKSD), and 151 to 153 (SAK). An Effector region motif is present at residues 37–45 (YISTIGVDF). A disordered region spans residues 173-203 (MASQPVPPKPGGPVVRPTEGKPINNKSSSCC). 2 S-geranylgeranyl cysteine lipidation sites follow: Cys-202 and Cys-203.

The protein belongs to the small GTPase superfamily. Rab family.

It localises to the cell membrane. Functionally, protein transport. Probably involved in vesicular traffic. The chain is GTP-binding protein yptV1 (YPTV1) from Volvox carteri (Green alga).